A 107-amino-acid chain; its full sequence is Small ribosomal subunit protein uS17 (107 aa).

This sequence belongs to the universal ribosomal protein uS17 family. Part of the 30S ribosomal subunit.

One of the primary rRNA binding proteins, it binds specifically to the 5'-end of 16S ribosomal RNA. The sequence is that of Small ribosomal subunit protein uS17 from Aquifex aeolicus (strain VF5).